The sequence spans 247 residues: Probable phosphatase swp_1620 (247 aa).

Residues His-8, His-10, His-16, His-41, Glu-74, His-102, His-132, Asp-193, and His-195 each contribute to the Zn(2+) site.

This sequence belongs to the PHP family. The cofactor is Zn(2+).

In Shewanella piezotolerans (strain WP3 / JCM 13877), this protein is Probable phosphatase swp_1620.